The primary structure comprises 182 residues: Keratin, ultra high-sulfur matrix protein (182 aa).

This sequence belongs to the KRTAP type 5 family. As to expression, cuticle layers of differentiating wool follicles.

In terms of biological role, the keratin products of mammalian epidermal derivatives such as wool and hair consist of microfibrils embedded in a rigid matrix of other proteins. The matrix proteins include the high-sulfur and high-tyrosine keratins, having molecular weights of 6-20 kDa, whereas the microfibrils contain the larger, low-sulfur keratins (40-56 kDa). The protein is Keratin, ultra high-sulfur matrix protein of Ovis aries (Sheep).